A 361-amino-acid chain; its full sequence is MAGNSIGQHFRVTTFGESHGIALGCIVDGCPPGLTISEADLQVDLDRRRPGTSRYTTQRREPDEVKILSGVFEGKTTGTSIGLLIENTDQRSKDYSDIKDKFRPGHADYTYHQKYGVRDYRGGGRSSARETAMRVAAGAIAKKYLQQEFGIEVRAYLSQMGEVAIDKVDWNEIENNDFFCPDVDKVAAFDELIRELKKEGDSIGAKIQVVATGVPVGLGEPVFDRLDADIAHALMSINAVKGVEIGDGFDVVRQKGSQHRDPLTPQGFRSNHSGGILGGISSGQDIVANIALKPTSSITVPGETIDVNGEPTELITKGRHDPCVGIRAVPIAEAMLAIVLMDHLLRHRGQNQGVVTTTPKI.

NADP(+) is bound by residues Arg48 and Arg54. Residues 125–127, 238–239, Gly278, 293–297, and Arg319 each bind FMN; these read RSS, NA, and KPTSS.

The protein belongs to the chorismate synthase family. As to quaternary structure, homotetramer. The cofactor is FMNH2.

The catalysed reaction is 5-O-(1-carboxyvinyl)-3-phosphoshikimate = chorismate + phosphate. It participates in metabolic intermediate biosynthesis; chorismate biosynthesis; chorismate from D-erythrose 4-phosphate and phosphoenolpyruvate: step 7/7. In terms of biological role, catalyzes the anti-1,4-elimination of the C-3 phosphate and the C-6 proR hydrogen from 5-enolpyruvylshikimate-3-phosphate (EPSP) to yield chorismate, which is the branch point compound that serves as the starting substrate for the three terminal pathways of aromatic amino acid biosynthesis. This reaction introduces a second double bond into the aromatic ring system. The polypeptide is Chorismate synthase (Vibrio cholerae serotype O1 (strain ATCC 39541 / Classical Ogawa 395 / O395)).